Reading from the N-terminus, the 204-residue chain is LexA repressor (204 aa).

The H-T-H motif DNA-binding region spans 28–48; that stretch reads RAEIAQELGFKSPNAAEEHLK. Residues Ser125 and Lys162 each act as for autocatalytic cleavage activity in the active site.

Belongs to the peptidase S24 family. In terms of assembly, homodimer.

It catalyses the reaction Hydrolysis of Ala-|-Gly bond in repressor LexA.. Represses a number of genes involved in the response to DNA damage (SOS response), including recA and lexA. In the presence of single-stranded DNA, RecA interacts with LexA causing an autocatalytic cleavage which disrupts the DNA-binding part of LexA, leading to derepression of the SOS regulon and eventually DNA repair. The protein is LexA repressor of Pseudomonas aeruginosa (strain LESB58).